Consider the following 194-residue polypeptide: dCTP deaminase (194 aa).

Residues 110–115, D128, 136–138, Y171, K178, and Q182 contribute to the dCTP site; these read RSSLAR and VLE. E138 (proton donor/acceptor) is an active-site residue. Residues 171-194 form a disordered region; it reads YNKRKNAKYKDQQEAVASRISQDS.

It belongs to the dCTP deaminase family. As to quaternary structure, homotrimer.

The catalysed reaction is dCTP + H2O + H(+) = dUTP + NH4(+). The protein operates within pyrimidine metabolism; dUMP biosynthesis; dUMP from dCTP (dUTP route): step 1/2. Catalyzes the deamination of dCTP to dUTP. This chain is dCTP deaminase, found in Shewanella amazonensis (strain ATCC BAA-1098 / SB2B).